The sequence spans 445 residues: MREIVHIQAGQCGNQIGAKFWEVISDEHGIDPTGSYHGDSDLQLERINVYYNEATGNKYVPRAILVDLEPGTMDSVRSGPFGQIFRPDNFVFGQSGAGNNWAKGHYTEGAELVDSVLDVVRKESESCDCLQGFQLTHSLGGGTGSGMGTLLISKIREEYPDRIMNTFSVMPSPKVSDTVVEPYNATLSVHQLVENTDETYCIDNEALYDICFRTLKLTTPTYGDLNHLVSATMSGVTTCLRFPGQLNADLRKLAVNMVPFPRLHFFMPGFAPLTSRGSQQYRALTVPELTQQMFDSKNMMAACDPRHGRYLTVAAIFRGRMSMKEVDEQMLNVQNKNSSYFVEWIPNNVKTAVCDIPPRGLKMSATFIGNSTAIQELFKRISEQFTAMFRRKAFLHWYTGEGMDEMEFTEAESNMNDLVSEYQQYQDATADEQGEFEEEGEEDEA.

The short motif at 1–4 (MREI) is the MREI motif element. Residues Gln-11, Glu-69, Ser-138, Gly-142, Thr-143, Gly-144, Asn-204, and Asn-226 each coordinate GTP. Glu-69 is a Mg(2+) binding site. The tract at residues 424 to 445 (QYQDATADEQGEFEEEGEEDEA) is disordered. The segment covering 429-445 (TADEQGEFEEEGEEDEA) has biased composition (acidic residues). Glu-438 bears the 5-glutamyl polyglutamate mark.

The protein belongs to the tubulin family. In terms of assembly, dimer of alpha and beta chains. A typical microtubule is a hollow water-filled tube with an outer diameter of 25 nm and an inner diameter of 15 nM. Alpha-beta heterodimers associate head-to-tail to form protofilaments running lengthwise along the microtubule wall with the beta-tubulin subunit facing the microtubule plus end conferring a structural polarity. Microtubules usually have 13 protofilaments but different protofilament numbers can be found in some organisms and specialized cells. Requires Mg(2+) as cofactor. In terms of processing, some glutamate residues at the C-terminus are polyglycylated, resulting in polyglycine chains on the gamma-carboxyl group. Glycylation is mainly limited to tubulin incorporated into axonemes (cilia and flagella) whereas glutamylation is prevalent in neuronal cells, centrioles, axonemes, and the mitotic spindle. Both modifications can coexist on the same protein on adjacent residues, and lowering polyglycylation levels increases polyglutamylation, and reciprocally. The precise function of polyglycylation is still unclear. Post-translationally, some glutamate residues at the C-terminus are polyglutamylated, resulting in polyglutamate chains on the gamma-carboxyl group. Polyglutamylation plays a key role in microtubule severing by spastin (SPAST). SPAST preferentially recognizes and acts on microtubules decorated with short polyglutamate tails: severing activity by SPAST increases as the number of glutamates per tubulin rises from one to eight, but decreases beyond this glutamylation threshold. In terms of tissue distribution, highly expressed in neuronal cells.

It localises to the cytoplasm. The protein resides in the cytoskeleton. Its function is as follows. Tubulin is the major constituent of microtubules, a cylinder consisting of laterally associated linear protofilaments composed of alpha- and beta-tubulin heterodimers. Microtubules grow by the addition of GTP-tubulin dimers to the microtubule end, where a stabilizing cap forms. Below the cap, tubulin dimers are in GDP-bound state, owing to GTPase activity of alpha-tubulin. The polypeptide is Tubulin beta-2 chain (Gallus gallus (Chicken)).